Here is a 1368-residue protein sequence, read N- to C-terminus: DNA-directed RNA polymerase subunit beta (1368 aa).

It belongs to the RNA polymerase beta chain family. In terms of assembly, the RNAP catalytic core consists of 2 alpha, 1 beta, 1 beta' and 1 omega subunit. When a sigma factor is associated with the core the holoenzyme is formed, which can initiate transcription.

It carries out the reaction RNA(n) + a ribonucleoside 5'-triphosphate = RNA(n+1) + diphosphate. In terms of biological role, DNA-dependent RNA polymerase catalyzes the transcription of DNA into RNA using the four ribonucleoside triphosphates as substrates. This Burkholderia cenocepacia (strain ATCC BAA-245 / DSM 16553 / LMG 16656 / NCTC 13227 / J2315 / CF5610) (Burkholderia cepacia (strain J2315)) protein is DNA-directed RNA polymerase subunit beta.